The sequence spans 496 residues: Probable malate:quinone oxidoreductase (496 aa).

It belongs to the MQO family. FAD serves as cofactor.

The enzyme catalyses (S)-malate + a quinone = a quinol + oxaloacetate. Its pathway is carbohydrate metabolism; tricarboxylic acid cycle; oxaloacetate from (S)-malate (quinone route): step 1/1. The sequence is that of Probable malate:quinone oxidoreductase from Prochlorococcus marinus (strain MIT 9303).